A 64-amino-acid chain; its full sequence is GRDAYIADSENCTYTCALNPYCNDLCTKNGAKSGYCQWAGRYGNACWCIDLPDKVPIRISGSCR.

Residues 2–64 (RDAYIADSEN…VPIRISGSCR (63 aa)) form the LCN-type CS-alpha/beta domain. Cystine bridges form between C12–C63, C16–C36, C22–C46, and C26–C48.

As to expression, expressed by the venom gland.

It is found in the secreted. This protein markedly relaxes the rat carbachol-precontracted anococcygeus muscle. This relaxation is inhibited by the inhibitor of nitric oxide (NO) synthase, N-nitro-L-arginine methyl ester (L-NAME), suggesting that the response induced by this protein is NO-mediated. In Olivierus martensii (Manchurian scorpion), this protein is Makatoxin-1.